The chain runs to 229 residues: Cytochrome c oxidase subunit 2 (229 aa).

Residues 1-14 (MPTPNQTNFQDAAS) are Mitochondrial intermembrane-facing. Residues 15–45 (PLMEELTHFHDHTLMIVFMISLLVLYILLSM) form a helical membrane-spanning segment. The Mitochondrial matrix segment spans residues 46–59 (LSTKLTHTNTANAQ). A helical transmembrane segment spans residues 60–87 (QAEMVWTILPAIILITIALPSLQILYMM). Topologically, residues 88-229 (DEINKPHMTI…DLWLAMIDTL (142 aa)) are mitochondrial intermembrane. Cu cation contacts are provided by His-161, Cys-196, Glu-198, Cys-200, His-204, and Met-207. Glu-198 lines the Mg(2+) pocket.

It belongs to the cytochrome c oxidase subunit 2 family. As to quaternary structure, component of the cytochrome c oxidase (complex IV, CIV), a multisubunit enzyme composed of 14 subunits. The complex is composed of a catalytic core of 3 subunits MT-CO1, MT-CO2 and MT-CO3, encoded in the mitochondrial DNA, and 11 supernumerary subunits COX4I, COX5A, COX5B, COX6A, COX6B, COX6C, COX7A, COX7B, COX7C, COX8 and NDUFA4, which are encoded in the nuclear genome. The complex exists as a monomer or a dimer and forms supercomplexes (SCs) in the inner mitochondrial membrane with NADH-ubiquinone oxidoreductase (complex I, CI) and ubiquinol-cytochrome c oxidoreductase (cytochrome b-c1 complex, complex III, CIII), resulting in different assemblies (supercomplex SCI(1)III(2)IV(1) and megacomplex MCI(2)III(2)IV(2)). Found in a complex with TMEM177, COA6, COX18, COX20, SCO1 and SCO2. Interacts with TMEM177 in a COX20-dependent manner. Interacts with COX20. Interacts with COX16. Requires Cu cation as cofactor.

The protein localises to the mitochondrion inner membrane. The enzyme catalyses 4 Fe(II)-[cytochrome c] + O2 + 8 H(+)(in) = 4 Fe(III)-[cytochrome c] + 2 H2O + 4 H(+)(out). Functionally, component of the cytochrome c oxidase, the last enzyme in the mitochondrial electron transport chain which drives oxidative phosphorylation. The respiratory chain contains 3 multisubunit complexes succinate dehydrogenase (complex II, CII), ubiquinol-cytochrome c oxidoreductase (cytochrome b-c1 complex, complex III, CIII) and cytochrome c oxidase (complex IV, CIV), that cooperate to transfer electrons derived from NADH and succinate to molecular oxygen, creating an electrochemical gradient over the inner membrane that drives transmembrane transport and the ATP synthase. Cytochrome c oxidase is the component of the respiratory chain that catalyzes the reduction of oxygen to water. Electrons originating from reduced cytochrome c in the intermembrane space (IMS) are transferred via the dinuclear copper A center (CU(A)) of subunit 2 and heme A of subunit 1 to the active site in subunit 1, a binuclear center (BNC) formed by heme A3 and copper B (CU(B)). The BNC reduces molecular oxygen to 2 water molecules using 4 electrons from cytochrome c in the IMS and 4 protons from the mitochondrial matrix. The sequence is that of Cytochrome c oxidase subunit 2 (MT-CO2) from Pelomedusa subrufa (African side-necked turtle).